A 283-amino-acid polypeptide reads, in one-letter code: Lectin subunit alpha (283 aa).

The N-terminal stretch at 1-23 (MSLTMKNVEGFVIFLVIFTSTAA) is a signal peptide. The C-type lectin domain occupies 51–159 (HECARHDQQL…NVKMGYICEP (109 aa)). 2 cysteine pairs are disulfide-bonded: cysteine 53–cysteine 157 and cysteine 132–cysteine 149.

In terms of biological role, role in the defense system of the organism against microorganisms. This lectin binds galactose. The sequence is that of Lectin subunit alpha from Sarcophaga peregrina (Flesh fly).